A 515-amino-acid chain; its full sequence is Maturase K (515 aa).

Belongs to the intron maturase 2 family. MatK subfamily.

The protein resides in the plastid. The protein localises to the chloroplast. Functionally, usually encoded in the trnK tRNA gene intron. Probably assists in splicing its own and other chloroplast group II introns. The sequence is that of Maturase K from Pinus koraiensis (Korean pine).